Here is a 73-residue protein sequence, read N- to C-terminus: MLQSCYNFLKEQHCQKASTQKGAEAAVKPLLVPHHVVATVQEIQLQAAVGELLLLEWLAMAVMLLLLCCCLTD.

The chain crosses the membrane as a helical span at residues 47–67 (AAVGELLLLEWLAMAVMLLLL).

Its subcellular location is the membrane. May induce apoptosis in cardiomyocytes when overexpressed ex-vivo. The sequence is that of Putative ORF9c protein from Homo sapiens (Human).